The sequence spans 326 residues: GTP cyclohydrolase MptA (326 aa).

The protein belongs to the GTP cyclohydrolase IV family. As to quaternary structure, homodimer. Fe(2+) serves as cofactor.

It catalyses the reaction GTP + H2O = 7,8-dihydroneopterin 2',3'-cyclic phosphate + formate + diphosphate + H(+). It participates in cofactor biosynthesis; 5,6,7,8-tetrahydromethanopterin biosynthesis. Converts GTP to 7,8-dihydro-D-neopterin 2',3'-cyclic phosphate, the first intermediate in the biosynthesis of coenzyme methanopterin. The sequence is that of GTP cyclohydrolase MptA from Methanoregula boonei (strain DSM 21154 / JCM 14090 / 6A8).